A 74-amino-acid polypeptide reads, in one-letter code: Large ribosomal subunit protein bL31 (74 aa).

Residues cysteine 16, cysteine 18, cysteine 38, and cysteine 41 each contribute to the Zn(2+) site.

This sequence belongs to the bacterial ribosomal protein bL31 family. Type A subfamily. As to quaternary structure, part of the 50S ribosomal subunit. It depends on Zn(2+) as a cofactor.

Binds the 23S rRNA. This Acinetobacter baumannii (strain AB307-0294) protein is Large ribosomal subunit protein bL31.